Reading from the N-terminus, the 126-residue chain is MHLSLLKAKIHRATVTHSELNYEGSIAIDGLLLEATGIREFEQVHIWDVTNGARFSTYAIRAEDGSGIMSLNGGAARHVQVGDLIIVAAFASMSEDEAKTFKPNLVYVNAHNAISHTNHSIPTQAA.

S25 functions as the Schiff-base intermediate with substrate; via pyruvic acid in the catalytic mechanism. Residue S25 is modified to Pyruvic acid (Ser). T57 is a binding site for substrate. Y58 functions as the Proton donor in the catalytic mechanism. Residue 73–75 (GGA) participates in substrate binding.

Belongs to the PanD family. As to quaternary structure, heterooctamer of four alpha and four beta subunits. It depends on pyruvate as a cofactor. Is synthesized initially as an inactive proenzyme, which is activated by self-cleavage at a specific serine bond to produce a beta-subunit with a hydroxyl group at its C-terminus and an alpha-subunit with a pyruvoyl group at its N-terminus.

It is found in the cytoplasm. It carries out the reaction L-aspartate + H(+) = beta-alanine + CO2. The protein operates within cofactor biosynthesis; (R)-pantothenate biosynthesis; beta-alanine from L-aspartate: step 1/1. Catalyzes the pyruvoyl-dependent decarboxylation of aspartate to produce beta-alanine. The chain is Aspartate 1-decarboxylase from Xanthomonas axonopodis pv. citri (strain 306).